The following is a 278-amino-acid chain: MADS-box transcription factor PHERES 2 (278 aa).

The region spanning 1-60 (MKRKMKLSLIENSVSRKTTFTKRKKGMTKKLTELVTLCGVEACAVVYSPFNSIPEAWPSR) is the MADS-box domain.

Interacts with AGL61/DIANA and AGL62. As to expression, male gametophyte, embryo and endosperm.

Its subcellular location is the nucleus. Functionally, probable transcription factor involved in the development of gametophytes and seeds. The polypeptide is MADS-box transcription factor PHERES 2 (PHE2) (Arabidopsis thaliana (Mouse-ear cress)).